Here is a 151-residue protein sequence, read N- to C-terminus: Macrodomain Ter protein (151 aa).

This sequence belongs to the MatP family. Homodimer.

It is found in the cytoplasm. Functionally, required for spatial organization of the terminus region of the chromosome (Ter macrodomain) during the cell cycle. Prevents early segregation of duplicated Ter macrodomains during cell division. Binds specifically to matS, which is a 13 bp signature motif repeated within the Ter macrodomain. In Enterobacter sp. (strain 638), this protein is Macrodomain Ter protein.